Reading from the N-terminus, the 636-residue chain is DNA-directed RNA polymerase subunit gamma (636 aa).

Zn(2+) contacts are provided by Cys71, Cys73, Cys86, and Cys89. Mg(2+) is bound by residues Asp467, Asp469, and Asp471.

It belongs to the RNA polymerase beta' chain family. RpoC1 subfamily. As to quaternary structure, in cyanobacteria the RNAP catalytic core is composed of 2 alpha, 1 beta, 1 beta', 1 gamma and 1 omega subunit. When a sigma factor is associated with the core the holoenzyme is formed, which can initiate transcription. The cofactor is Mg(2+). Zn(2+) serves as cofactor.

It catalyses the reaction RNA(n) + a ribonucleoside 5'-triphosphate = RNA(n+1) + diphosphate. DNA-dependent RNA polymerase catalyzes the transcription of DNA into RNA using the four ribonucleoside triphosphates as substrates. This Picosynechococcus sp. (strain ATCC 27264 / PCC 7002 / PR-6) (Agmenellum quadruplicatum) protein is DNA-directed RNA polymerase subunit gamma.